Reading from the N-terminus, the 724-residue chain is MVMKSSVEEEEGGWGLGIPEKMRNNANWVDVTQEFKGACKELKLGELLHDKLFGLFEAMSAIEMMDPKMDAGMIGNQVNRKVLNFDQAVKDEAIRVKDLSIPELIGIMDTCFCCLITWLEGHSLAQTVFTCLYVHNPDLIQDPALKAFALGILKICDIAREKVNKAAVFEEEDFQAMTYGFKMANNVTDLRVTGMLKDVEDELQRKVKSTRSRQGEQRDPEVELDHQQCLALFSRVKFTRLLLSALISFTKKETSAVSEAQKLMSQAADLLPAVHATIQYGIQSQNDTTKGDHPIMMGFEPLVNQRLLPPTFPRYAKIIKREEMVNYFSKLIERIKSVCEVINITNLHSILDFFCEFSEQSPCVLSRSLLQTTFLIDNKKVFGTHLMQDMIKDALRCFVSPPVLSSKCSLNNNHQAKDYIDSFVTHCTRPFCSLIQIHGHNRARQRDKLGHILEEFATLQDEAEKVDAALHGLLMKLEPQRQHLACLGTWILYHNLRIMIQYLLSGFELELYSMHEYYYIYWYLSEFLYAWLMSTLSRADSSQMAEERILEEQLKVRSSKKSKKKKKARPLSKEITMSQAYQNMCAGMYKTMIALDMDRKVRKPQFELDSEQVRYEHRFAPFNSVVTPPPVHYIQFKEMSDLKKYNPPPRSADLYMAASKHFQQAKLLLENVTSPDAEVNRILKVAKPNIVVMKLLAGGHKKETKALPEFDFSAHKYFPIVKIL.

Belongs to the MAK10 family. As to quaternary structure, component of the N-terminal acetyltransferase C (NatC) complex.

Its subcellular location is the cytoplasm. Auxillary component of the N-terminal acetyltransferase C (NatC) complex which catalyzes acetylation of N-terminal methionine residues. N-terminal acetylation protects proteins from ubiquitination and degradation by the N-end rule pathway. Regulates cell proliferation during embryonic development. This is N-alpha-acetyltransferase 35, NatC auxiliary subunit (naa35) from Danio rerio (Zebrafish).